The primary structure comprises 277 residues: Large ribosomal subunit protein uL2 (277 aa).

Disordered regions lie at residues 28 to 55 (EPEKSLTHHKHSKQGRNNRGVVTSRHRG) and 207 to 277 (KAGR…RTQG). Basic residues-rich tracts occupy residues 34–43 (THHKHSKQGR), 209–220 (GRTRHRGQRPHV), and 255–265 (LGRKTRNKKKR).

It belongs to the universal ribosomal protein uL2 family. Part of the 50S ribosomal subunit. Forms a bridge to the 30S subunit in the 70S ribosome.

One of the primary rRNA binding proteins. Required for association of the 30S and 50S subunits to form the 70S ribosome, for tRNA binding and peptide bond formation. It has been suggested to have peptidyltransferase activity; this is somewhat controversial. Makes several contacts with the 16S rRNA in the 70S ribosome. This is Large ribosomal subunit protein uL2 from Microcystis aeruginosa (strain NIES-843 / IAM M-2473).